The following is a 184-amino-acid chain: MQDLSVNEYLRQYIRTVPDWPAAGVQFRDITPLLQDPKVFRVLIDAFVHRYMDRALRPDVVAGLDARGFILGAVVAYELNVGFVPIRKKGKLPFTTVEETYELEYGSATVELHADAVKPGDRVLLIDDLIATGGTMMAGRRLLERLGATVTEGAAIVDLPELGGSSRLRESGLPLYTLVDFAGH.

It belongs to the purine/pyrimidine phosphoribosyltransferase family. In terms of assembly, homodimer.

The protein localises to the cytoplasm. The enzyme catalyses AMP + diphosphate = 5-phospho-alpha-D-ribose 1-diphosphate + adenine. Its pathway is purine metabolism; AMP biosynthesis via salvage pathway; AMP from adenine: step 1/1. Functionally, catalyzes a salvage reaction resulting in the formation of AMP, that is energically less costly than de novo synthesis. This chain is Adenine phosphoribosyltransferase, found in Paracidovorax citrulli (strain AAC00-1) (Acidovorax citrulli).